We begin with the raw amino-acid sequence, 683 residues long: U4/U6 small nuclear ribonucleoprotein Prp3 (683 aa).

In terms of domain architecture, PWI spans 1–87 (MALSKRELDE…HSKSSSDRSR (87 aa)). The segment covering 73 to 107 (GRSSRHSKSSSDRSRKRELKEVFGDDSEISKESSG) has biased composition (basic and acidic residues). The disordered stretch occupies residues 73 to 135 (GRSSRHSKSS…IPGPPSESPG (63 aa)). Residue Lys139 forms a Glycyl lysine isopeptide (Lys-Gly) (interchain with G-Cter in SUMO2) linkage. Positions 153–183 (IEERKKQLSFISPPTPQPKTPSSSQPERLPI) are disordered. Phosphoserine is present on Ser164. Phosphothreonine is present on Thr167. Residues Lys244 and Lys252 each participate in a glycyl lysine isopeptide (Lys-Gly) (interchain with G-Cter in SUMO2) cross-link. Residues 416-550 (NLVEHPAQLN…VHISVYRVRN (135 aa)) are mediates interaction with SART3. Position 619 is a phosphoserine (Ser619).

Component of the precatalytic spliceosome (spliceosome B complex). Component of the U4/U6-U5 tri-snRNP complex, a building block of the precatalytic spliceosome (spliceosome B complex). The U4/U6-U5 tri-snRNP complex is composed of the U4, U6 and U5 snRNAs and at least PRPF3, PRPF4, PRPF6, PRPF8, PRPF31, SNRNP200, TXNL4A, SNRNP40, SNRPB, SNRPD1, SNRPD2, SNRPD3, SNRPE, SNRPF, SNRPG, DDX23, CD2BP2, PPIH, SNU13, EFTUD2, SART1 and USP39, plus LSM2, LSM3, LSM4, LSM5, LSM6, LSM7 and LSM8. Interacts directly with PRPF4. Part of a heteromeric complex containing PPIH, PRPF3 and PRPF4 that is stable in the absence of RNA. Interacts with SART3; the interaction is direct and recruits the deubiquitinase USP4 to PRPF3. Interacts with PRPF19. Interacts ('Lys-63'-linked polyubiquitinated) with PRPF8 (via the MPN (JAB/Mov34) domain); may stabilize the U4/U6-U5 tri-snRNP complex. Interacts with ERCC6. Ubiquitinated. Undergoes 'Lys-63'-linked polyubiquitination by PRPF19 and deubiquitination by USP4. 'Lys-63'-linked ubiquitination increases the affinity for PRPF8 and may regulate the assembly of the U4/U6-U5 tri-snRNP complex.

It is found in the nucleus. The protein localises to the nucleus speckle. Plays a role in pre-mRNA splicing as component of the U4/U6-U5 tri-snRNP complex that is involved in spliceosome assembly, and as component of the precatalytic spliceosome (spliceosome B complex). The chain is U4/U6 small nuclear ribonucleoprotein Prp3 (PRPF3) from Pongo abelii (Sumatran orangutan).